We begin with the raw amino-acid sequence, 254 residues long: Emerin (254 aa).

Residue Met1 is modified to N-acetylmethionine. The region spanning 1 to 45 is the LEM domain; sequence MDNYADLSDTELTTLLRRYNIPHGPVVGSTRRLYEKKIFEYETQR. A phosphoserine mark is found at Ser8 and Ser29. The interaction with F-actin stretch occupies residues 46 to 222; that stretch reads RRLSPPSSSA…PGAGLGQDRQ (177 aa). At Ser49 the chain carries Phosphoserine; by PKA. Ser54, Ser60, Ser87, Ser98, Ser141, Ser142, and Ser143 each carry phosphoserine. At Tyr161 the chain carries Phosphotyrosine. An interaction with CTNNB1 region spans residues 168 to 186; it reads RPVSASRSSLDLSYYPTSS. Phosphoserine occurs at positions 171, 173, and 175. Residues 223-243 traverse the membrane as a helical segment; it reads VPLWGQLLLFLVFVIVLFFIY.

In terms of assembly, interacts with lamins A and C, BANF1, GMCL, BCLAF1 and YTHDC1/YT521. Interacts with TMEM43; the interaction retains emerin in the nuclear inner membrane. Interacts with SUN1 and SUN2. Interacts with ACTB, SPTAN1, F-actin, CTNNB1 and beta-tubulin. Interacts with TMEM201. Interacts with NEMP1. In terms of processing, found in four different phosphorylated forms, three of which appear to be associated with the cell cycle. In terms of tissue distribution, skeletal muscle, heart, colon, testis, ovary and pancreas.

It is found in the nucleus inner membrane. The protein resides in the nucleus outer membrane. In terms of biological role, stabilizes and promotes the formation of a nuclear actin cortical network. Stimulates actin polymerization in vitro by binding and stabilizing the pointed end of growing filaments. Inhibits beta-catenin activity by preventing its accumulation in the nucleus. Acts by influencing the nuclear accumulation of beta-catenin through a CRM1-dependent export pathway. Links centrosomes to the nuclear envelope via a microtubule association. Required for proper localization of non-farnesylated prelamin-A/C. Together with NEMP1, contributes to nuclear envelope stiffness in germ cells. EMD and BAF are cooperative cofactors of HIV-1 infection. Association of EMD with the viral DNA requires the presence of BAF and viral integrase. The association of viral DNA with chromatin requires the presence of BAF and EMD. The chain is Emerin (EMD) from Homo sapiens (Human).